The chain runs to 327 residues: Malate dehydrogenase (327 aa).

NAD(+) is bound at residue 12 to 18 (GAAGQIG). The substrate site is built by R93 and R99. Residues N106, Q113, and 130-132 (VGN) contribute to the NAD(+) site. The substrate site is built by N132 and R163. The active-site Proton acceptor is H188.

The protein belongs to the LDH/MDH superfamily. MDH type 2 family.

The catalysed reaction is (S)-malate + NAD(+) = oxaloacetate + NADH + H(+). Its function is as follows. Catalyzes the reversible oxidation of malate to oxaloacetate. The protein is Malate dehydrogenase of Cupriavidus pinatubonensis (strain JMP 134 / LMG 1197) (Cupriavidus necator (strain JMP 134)).